The chain runs to 239 residues: Serine protease SplD (239 aa).

Positions 1-36 (MNKNIIIKSIAALTILTSITGVGTTVVDGIQQTAKA) are cleaved as a signal peptide. Active-site charge relay system residues include H75, D114, and S192.

This sequence belongs to the peptidase S1B family.

Its subcellular location is the secreted. The protein is Serine protease SplD (splD) of Staphylococcus aureus (strain Mu3 / ATCC 700698).